The following is a 100-amino-acid chain: Urease subunit gamma (100 aa).

Belongs to the urease gamma subunit family. Heterotrimer of UreA (gamma), UreB (beta) and UreC (alpha) subunits. Three heterotrimers associate to form the active enzyme.

Its subcellular location is the cytoplasm. The catalysed reaction is urea + 2 H2O + H(+) = hydrogencarbonate + 2 NH4(+). Its pathway is nitrogen metabolism; urea degradation; CO(2) and NH(3) from urea (urease route): step 1/1. This chain is Urease subunit gamma, found in Prochlorococcus marinus (strain MIT 9301).